An 804-amino-acid polypeptide reads, in one-letter code: Leucine--tRNA ligase (804 aa).

The short motif at 39 to 50 (PYPSGKGLHVGH) is the 'HIGH' region element. Residues 573-577 (KMSKS) carry the 'KMSKS' region motif. Lys576 contributes to the ATP binding site.

This sequence belongs to the class-I aminoacyl-tRNA synthetase family.

It localises to the cytoplasm. The enzyme catalyses tRNA(Leu) + L-leucine + ATP = L-leucyl-tRNA(Leu) + AMP + diphosphate. This is Leucine--tRNA ligase from Lactobacillus delbrueckii subsp. bulgaricus (strain ATCC 11842 / DSM 20081 / BCRC 10696 / JCM 1002 / NBRC 13953 / NCIMB 11778 / NCTC 12712 / WDCM 00102 / Lb 14).